The chain runs to 179 residues: Transcription factor E (179 aa).

One can recognise an HTH TFE/IIEalpha-type domain in the interval 1-102; the sequence is MAKKKVKYTF…YWRFDSRKAA (102 aa).

It belongs to the TFE family. As to quaternary structure, monomer. Interaction with RNA polymerase subunits RpoF and RpoE is necessary for Tfe stimulatory transcription activity. Able to interact with Tbp and RNA polymerase in the absence of DNA promoter. Interacts both with the preinitiation and elongation complexes.

Transcription factor that plays a role in the activation of archaeal genes transcribed by RNA polymerase. Facilitates transcription initiation by enhancing TATA-box recognition by TATA-box-binding protein (Tbp), and transcription factor B (Tfb) and RNA polymerase recruitment. Not absolutely required for transcription in vitro, but particularly important in cases where Tbp or Tfb function is not optimal. It dynamically alters the nucleic acid-binding properties of RNA polymerases by stabilizing the initiation complex and destabilizing elongation complexes. Seems to translocate with the RNA polymerase following initiation and acts by binding to the non template strand of the transcription bubble in elongation complexes. The protein is Transcription factor E of Methanosphaera stadtmanae (strain ATCC 43021 / DSM 3091 / JCM 11832 / MCB-3).